Consider the following 204-residue polypeptide: Holliday junction branch migration complex subunit RuvA (204 aa).

Residues 1–64 (MISRMKGIIL…EDAQLLYGFH (64 aa)) are domain I. The interval 65–143 (HPKERAMFSE…NLNKNLFKST (79 aa)) is domain II. The interval 144–155 (ADHMLSSVSTDL) is flexible linker. The interval 156–204 (SAKSAEAEAISALISLGYKPQEAAQLIKNIAQPDLDSQALIKHALRSTL) is domain III.

The protein belongs to the RuvA family. In terms of assembly, homotetramer. Forms an RuvA(8)-RuvB(12)-Holliday junction (HJ) complex. HJ DNA is sandwiched between 2 RuvA tetramers; dsDNA enters through RuvA and exits via RuvB. An RuvB hexamer assembles on each DNA strand where it exits the tetramer. Each RuvB hexamer is contacted by two RuvA subunits (via domain III) on 2 adjacent RuvB subunits; this complex drives branch migration. In the full resolvosome a probable DNA-RuvA(4)-RuvB(12)-RuvC(2) complex forms which resolves the HJ.

It is found in the cytoplasm. In terms of biological role, the RuvA-RuvB-RuvC complex processes Holliday junction (HJ) DNA during genetic recombination and DNA repair, while the RuvA-RuvB complex plays an important role in the rescue of blocked DNA replication forks via replication fork reversal (RFR). RuvA specifically binds to HJ cruciform DNA, conferring on it an open structure. The RuvB hexamer acts as an ATP-dependent pump, pulling dsDNA into and through the RuvAB complex. HJ branch migration allows RuvC to scan DNA until it finds its consensus sequence, where it cleaves and resolves the cruciform DNA. The polypeptide is Holliday junction branch migration complex subunit RuvA (Hamiltonella defensa subsp. Acyrthosiphon pisum (strain 5AT)).